The primary structure comprises 451 residues: L-seryl-tRNA(Sec) selenium transferase (451 aa).

An N6-(pyridoxal phosphate)lysine modification is found at K286.

This sequence belongs to the SelA family. It depends on pyridoxal 5'-phosphate as a cofactor.

Its subcellular location is the cytoplasm. The enzyme catalyses L-seryl-tRNA(Sec) + selenophosphate + H(+) = L-selenocysteinyl-tRNA(Sec) + phosphate. It participates in aminoacyl-tRNA biosynthesis; selenocysteinyl-tRNA(Sec) biosynthesis; selenocysteinyl-tRNA(Sec) from L-seryl-tRNA(Sec) (bacterial route): step 1/1. Its function is as follows. Converts seryl-tRNA(Sec) to selenocysteinyl-tRNA(Sec) required for selenoprotein biosynthesis. The chain is L-seryl-tRNA(Sec) selenium transferase from Aliarcobacter butzleri (strain RM4018) (Arcobacter butzleri).